Consider the following 3256-residue polypeptide: Proliferation marker protein Ki-67 (3256 aa).

The FHA domain maps to 27–76 (CLFGRGIECDIRIQLPVVSKQHCKIEIHEQEAILHNFSSTNPTQVNGSVI). The disordered stretch occupies residues 101–199 (SLQNGRKSTE…RNGRNAADPI (99 aa)). Over residues 107–122 (KSTEFPRKIREQEPAR) the composition is skewed to basic and acidic residues. Residues serine 125, serine 128, and serine 166 each carry the phosphoserine modification. The span at 161–173 (NVKEDSTADDSKD) shows a compositional bias: basic and acidic residues. A compositionally biased stretch (polar residues) spans 174-183 (SVAQGTTNVH). Lysine 245 is covalently cross-linked (Glycyl lysine isopeptide (Lys-Gly) (interchain with G-Cter in SUMO2)). A phosphoserine mark is found at serine 264, serine 296, and serine 308. Disordered regions lie at residues 271–426 (ATEK…RGSI) and 513–542 (RPEL…LVMH). Residues 314–324 (DQNKGKGRDVE) show a composition bias toward basic and acidic residues. A phosphothreonine mark is found at threonine 328 and threonine 347. Over residues 349–358 (VQYSQQQNSP) the composition is skewed to polar residues. 3 positions are modified to phosphoserine: serine 352, serine 357, and serine 374. The residue at position 401 (threonine 401) is a Phosphothreonine. A Phosphoserine modification is found at serine 411. The span at 414 to 425 (KPENLSSKTRGS) shows a compositional bias: polar residues. The segment at 495–678 (ESEGIPLKRR…AKQTQTKVIK (184 aa)) is positively charged patch (CP). A PP1-binding domain is found at 502–549 (KRRRVSFGGHLRPELFDENLPPNTPLKRGEAPTKRKSLVMHTPPVLKK). The residue at position 538 (serine 538) is a Phosphoserine. Threonine 543 bears the Phosphothreonine mark. The segment at 575 to 632 (SLVISPPAPSPRKTPVASDQRRRSCKTAPASSSKSQTEVPKRGGRKSGNLPSKRVSIS) is disordered. A phosphoserine mark is found at serine 579 and serine 584. Residues 603–612 (PASSSKSQTE) are compositionally biased toward polar residues. Serine 648 bears the Phosphoserine mark. The tract at residues 674 to 707 (TKVIKHGPQRSMNKRQRRPATPKKPVGEVHSQFS) is disordered. Basic residues predominate over residues 676–694 (VIKHGPQRSMNKRQRRPAT). Residue threonine 761 is modified to Phosphothreonine. Positions 853-886 (SLETKTSDTETEPSKTVSTANRSGRSTEFRNIQK) are disordered. Residue serine 859 is modified to Phosphoserine. Residues 866–882 (SKTVSTANRSGRSTEFR) are compositionally biased toward polar residues. The segment at 1000–2928 (GKITKMPCQS…ASFQELSQTP (1929 aa)) is 16 X 122 AA approximate repeats. K167R repeat units follow at residues 1001–1112 (KITK…FQTP), 1123–1234 (KTTK…FQTP), 1245–1356 (KTTK…FQTP), 1367–1477 (KTTK…FQTP), 1488–1597 (KTTK…LFQT), and 1609–1720 (KTAK…FQTP). Position 1017 is a phosphothreonine (threonine 1017). Glycyl lysine isopeptide (Lys-Gly) (interchain with G-Cter in SUMO2) cross-links involve residues lysine 1022 and lysine 1035. The tract at residues 1045–1073 (TRTSGETTHTHREPAGDGKSIRTFKESPK) is disordered. A compositionally biased stretch (basic and acidic residues) spans 1052–1072 (THTHREPAGDGKSIRTFKESP). Residue serine 1071 is modified to Phosphoserine. A Phosphothreonine modification is found at threonine 1091. A Glycyl lysine isopeptide (Lys-Gly) (interchain with G-Cter in SUMO1); alternate cross-link involves residue lysine 1093. Lysine 1093 is covalently cross-linked (Glycyl lysine isopeptide (Lys-Gly) (interchain with G-Cter in SUMO2); alternate). Serine 1098 bears the Phosphoserine mark. A disordered region spans residues 1109-1151 (FQTPGPSEESMTDEKTTKIACKSPPPESVDTPTSTKQWPKRSL). Phosphothreonine is present on threonine 1111. Serine 1131 bears the Phosphoserine mark. Threonine 1139 carries the post-translational modification Phosphothreonine. Serine 1142 is subject to Phosphoserine. Threonine 1167 carries the phosphothreonine modification. The residue at position 1169 (serine 1169) is a Phosphoserine. Threonine 1176 carries the post-translational modification Phosphothreonine. Residues lysine 1185 and lysine 1188 each participate in a glycyl lysine isopeptide (Lys-Gly) (interchain with G-Cter in SUMO2) cross-link. Threonine 1193 bears the Phosphothreonine mark. Serine 1207 carries the post-translational modification Phosphoserine. Threonine 1233 bears the Phosphothreonine mark. Residues 1246 to 1276 (TTKIPCDSPQSDPVDTPTSTKQRPKRSIRKA) form a disordered region. Phosphoserine is present on residues serine 1253 and serine 1256. The span at 1253–1266 (SPQSDPVDTPTSTK) shows a compositional bias: polar residues. Residues threonine 1261, threonine 1298, threonine 1315, and threonine 1327 each carry the phosphothreonine modification. The disordered stretch occupies residues 1323-1518 (TENLTGSKRR…PQSKRSLRKV (196 aa)). Residue serine 1329 is modified to Phosphoserine. Phosphothreonine is present on threonine 1335. Residue lysine 1337 forms a Glycyl lysine isopeptide (Lys-Gly) (interchain with G-Cter in SUMO2) linkage. Residue threonine 1355 is modified to Phosphothreonine. Residue serine 1376 is modified to Phosphoserine. At threonine 1383 the chain carries Phosphothreonine. Serine 1386 is subject to Phosphoserine. Basic and acidic residues-rich tracts occupy residues 1394–1406 (PLEK…ELSA) and 1418–1442 (THTD…KQKL). Phosphothreonine is present on residues threonine 1420 and threonine 1437. Serine 1496 is modified (phosphoserine). The residue at position 1503 (threonine 1503) is a Phosphothreonine. Phosphoserine is present on serine 1506. Phosphothreonine is present on threonine 1540. Phosphotyrosine is present on tyrosine 1552. 2 positions are modified to phosphothreonine: threonine 1557 and threonine 1569. 2 positions are modified to phosphoserine: serine 1571 and serine 1617. A disordered region spans residues 1597 to 1675 (TRGHTEESMT…PTGDGKSMKA (79 aa)). Lysine 1639 is subject to N6-acetyllysine. Lysine 1643 participates in a covalent cross-link: Glycyl lysine isopeptide (Lys-Gly) (interchain with G-Cter in SUMO2). A compositionally biased stretch (basic and acidic residues) spans 1660 to 1672 (THTHTEPTGDGKS). Residues serine 1679 and serine 1689 each carry the phosphoserine modification. Disordered regions lie at residues 1689–1708 (SLTG…EVPE), 1717–1765 (FQTP…ADTE), 1771–1790 (FRKQ…PAVG), 1801–1824 (TPVQ…TRKE), and 1839–1886 (FQTP…KADV). A Glycyl lysine isopeptide (Lys-Gly) (interchain with G-Cter in SUMO2) cross-link involves residue lysine 1703. Threonine 1719 carries the post-translational modification Phosphothreonine. Position 1721 is a phosphoserine (serine 1721). The segment covering 1722 to 1733 (HTKESMTNEKTT) has biased composition (basic and acidic residues). K167R repeat units lie at residues 1731 to 1842 (KTTK…FQTP), 1854 to 1964 (TKKI…FQTP), 1975 to 2086 (KITE…FQTP), 2097 to 2204 (KTTK…FQTP), and 2215 to 2326 (KTTK…FQTP). Serine 1740 carries the phosphoserine modification. Residues threonine 1747, threonine 1764, threonine 1784, and threonine 1801 each carry the phosphothreonine modification. Serine 1815 carries the phosphoserine modification. Phosphothreonine is present on threonine 1841. A phosphoserine mark is found at serine 1861 and serine 1864. The span at 1861–1874 (SPQSDPADTPTNTK) shows a compositional bias: polar residues. Threonine 1869, threonine 1897, threonine 1906, and threonine 1923 each carry phosphothreonine. Serine 1937 is subject to Phosphoserine. Residues 1961–2002 (FQTPGHTEESMTDDKITEVSCKSPQPDPVKTPTSSKQRLKIS) form a disordered region. A Phosphothreonine modification is found at threonine 1963. Residues 1966–1977 (HTEESMTDDKIT) are compositionally biased toward basic and acidic residues. Serine 1983 carries the phosphoserine modification. Residue lysine 2005 is modified to N6-acetyllysine. Lysine 2009 is covalently cross-linked (Glycyl lysine isopeptide (Lys-Gly) (interchain with G-Cter in SUMO1); alternate). Lysine 2009 is covalently cross-linked (Glycyl lysine isopeptide (Lys-Gly) (interchain with G-Cter in SUMO2); alternate). The disordered stretch occupies residues 2017 to 2192 (KLTQTSGKTT…TPKGKAQPLE (176 aa)). A phosphothreonine mark is found at threonine 2028 and threonine 2065. Composition is skewed to basic and acidic residues over residues 2028–2046 (THRE…KESA) and 2061–2070 (RWPRTPKEEA). Residue lysine 2067 forms a Glycyl lysine isopeptide (Lys-Gly) (interchain with G-Cter in SUMO1); alternate linkage. Lysine 2067 is covalently cross-linked (Glycyl lysine isopeptide (Lys-Gly) (interchain with G-Cter in SUMO2); alternate). Serine 2072 bears the Phosphoserine mark. Threonine 2085 carries the phosphothreonine modification. Residues 2087 to 2099 (DHTEESTTDDKTT) show a composition bias toward basic and acidic residues. Serine 2105 carries the phosphoserine modification. Threonine 2113 is subject to Phosphothreonine. A phosphoserine mark is found at serine 2116 and serine 2135. Basic and acidic residues predominate over residues 2145-2168 (HTDKVPGDEDKGINVFRETAKQKL). Phosphothreonine is present on residues threonine 2146, threonine 2163, and threonine 2203. A disordered region spans residues 2205–2400 (ICTDKPTTHE…KPAVSDEKNI (196 aa)). Serine 2223 carries the phosphoserine modification. Residues threonine 2231 and threonine 2233 each carry the phosphothreonine modification. Serine 2239 carries the phosphoserine modification. Phosphothreonine is present on threonine 2259. Serine 2261 carries the phosphoserine modification. Phosphothreonine occurs at positions 2268, 2285, 2325, 2328, and 2333. 5 K167R repeats span residues 2336-2447 (KTTK…FQTP), 2458-2569 (KITE…FSAP), 2580-2688 (KNTK…LSET), 2700-2805 (KATK…GFKD), and 2819-2928 (KTTK…SQTP). The residue at position 2344 (serine 2344) is a Phosphoserine. 2 positions are modified to phosphothreonine: threonine 2352 and threonine 2389. Serine 2395 carries the post-translational modification Phosphoserine. The residue at position 2406 (threonine 2406) is a Phosphothreonine. Residue serine 2420 is modified to Phosphoserine. Phosphothreonine occurs at positions 2426 and 2446. A disordered region spans residues 2445–2480 (QTPGHTEESMTDDKITEVSCKSPQPESFKTSRSSKQ). Residues 2449–2460 (HTEESMTDDKIT) show a composition bias toward basic and acidic residues. Over residues 2463 to 2475 (SCKSPQPESFKTS) the composition is skewed to polar residues. Position 2466 is a phosphoserine (serine 2466). A Glycyl lysine isopeptide (Lys-Gly) (interchain with G-Cter in SUMO1) cross-link involves residue lysine 2492. The segment at 2497 to 2521 (AVSKLTRTSGETTQTHTEPTGDSKS) is disordered. Residues 2501-2514 (LTRTSGETTQTHTE) are compositionally biased toward polar residues. A phosphoserine mark is found at serine 2505, serine 2528, and serine 2588. The interval 2570–3256 (GHTEESMTID…TRSHRDSEDI (687 aa)) is disordered. Basic and acidic residues-rich tracts occupy residues 2609–2618 (RKEVKEELSA), 2632–2644 (THKE…EGIK), and 2660–2675 (EPSR…KAQP). Lysine 2613 participates in a covalent cross-link: Glycyl lysine isopeptide (Lys-Gly) (interchain with G-Cter in SUMO1); alternate. Lysine 2613 is covalently cross-linked (Glycyl lysine isopeptide (Lys-Gly) (interchain with G-Cter in SUMO2); alternate). Serine 2638 bears the Phosphoserine mark. The span at 2685–2696 (LSETSGHTQESL) shows a compositional bias: polar residues. Serine 2708 is modified (phosphoserine). Lysine 2734 participates in a covalent cross-link: Glycyl lysine isopeptide (Lys-Gly) (interchain with G-Cter in SUMO1); alternate. A Glycyl lysine isopeptide (Lys-Gly) (interchain with G-Cter in SUMO2); alternate cross-link involves residue lysine 2734. 2 stretches are compositionally biased toward basic and acidic residues: residues 2751–2770 (DADK…KESA) and 2810–2821 (HTEESMTDDKTT). Residues serine 2827, serine 2828, and serine 2838 each carry the phosphoserine modification. Lysine 2852 is covalently cross-linked (Glycyl lysine isopeptide (Lys-Gly) (interchain with G-Cter in SUMO1); alternate). A Glycyl lysine isopeptide (Lys-Gly) (interchain with G-Cter in SUMO2); alternate cross-link involves residue lysine 2852. Over residues 2869–2881 (THTDKEPVGEGKG) the composition is skewed to basic and acidic residues. Polar residues predominate over residues 2941–2951 (SFTSAPKQTPD). Residue lysine 2967 forms a Glycyl lysine isopeptide (Lys-Gly) (interchain with G-Cter in SUMO2) linkage. Polar residues predominate over residues 2982–2991 (KSQSKSNTSL). Residue lysine 2986 is modified to N6-acetyllysine. A compositionally biased stretch (basic residues) spans 3029–3039 (KKQRVAPRARG). ATP is bound at residue 3034–3041 (APRARGKS). Serine 3041 is modified (phosphoserine). Basic and acidic residues-rich tracts occupy residues 3071–3080 (KTNKEEHKLQ) and 3113–3124 (ERIEINRNEKKP). At serine 3128 the chain carries Phosphoserine. Positions 3138–3154 (DGARKPIPRDKVTENKR) are enriched in basic and acidic residues. Polar residues predominate over residues 3207–3223 (SQPAASTLESKSVQRVT). Residues 3228–3241 (RCAENPKKAEDNVC) are compositionally biased toward basic and acidic residues.

Interacts with KIF15. Interacts (via the FHA domain) with NIFK. Interacts with PPP1CC. Component of a complex at least composed of ZNF335, HCFC1, CCAR2, EMSY, MKI67, RBBP5, ASH2L and WDR5; the complex is formed as a result of interactions between components of a nuclear receptor-mediated transcription complex and a histone methylation complex. Interacts with ZNF335. Hyperphosphorylated by CDK1 in mitosis; hyperphosphorylatiom prevents undergoing liquid-liquid phase separation. Dephosphorylated by PPP1CC at the onset of anaphase. Dephosphorylated by protein phosphatase 2A (PP2A) at the onset of anaphase. Dephosphorylation by protein phosphatase 2A (PP2A) and simultaneous exposure of the positively charged patch (CP) during mitotic exit induce the RNA-dependent formation of a liquid-like condensed phase on the chromosome surface. In terms of processing, ubiquitinated by the APC/C complex after neuronal progenitors exit mitosis during brain development, leading to clearance from constitutive heterochromatin.

It localises to the chromosome. The protein localises to the nucleus. Its subcellular location is the nucleolus. Protein that associates with the surface of mitotic chromosomes and acts both as a chromosome repellent during early mitosis and chromosome attractant during late mitosis. Required to maintain individual mitotic chromosomes dispersed in the cytoplasm following nuclear envelope disassembly. During early mitosis, relocalizes from nucleoli to the chromosome surface where it forms extended brush structures that cover a substantial fraction of the chromosome surface. The MKI67 brush structure prevents chromosomes from collapsing into a single chromatin mass by forming a steric and electrostatic charge barrier: the protein has a high net electrical charge and acts as a surfactant, dispersing chromosomes and enabling independent chromosome motility. During mitotic anaphase, the MKI67 brush structure collapses and MKI67 switches from a chromosome repellent to a chromosome attractant to promote chromosome clustering and facilitate the exclusion of large cytoplasmic particles from the future nuclear space. Mechanistically, dephosphorylation during mitotic exit and simultaneous exposure of a conserved basic patch induce the RNA-dependent formation of a liquid-like condensed phase on the chromosome surface, promoting coalescence of neighboring chromosome surfaces and clustering of chromosomes. Binds premature ribosomal RNAs during anaphase; promoting liquid-liquid phase separation. Binds DNA, with a preference for supercoiled DNA and AT-rich DNA. Does not contribute to the internal structure of mitotic chromosomes. May play a role in chromatin organization; it is however unclear whether it plays a direct role in chromatin organization or whether it is an indirect consequence of its function in mitotic chromosome. In Homo sapiens (Human), this protein is Proliferation marker protein Ki-67.